A 419-amino-acid chain; its full sequence is Gustatory receptor for sugar taste 64c (419 aa).

Residues 1-15 (MQQSGQKGTRNTLQH) are Cytoplasmic-facing. Residues 16–36 (AIGPVLVIAQFFGVLPVAGVW) form a helical membrane-spanning segment. Residues 37 to 48 (PSCRPERVRFRW) lie on the Extracellular side of the membrane. Residues 49–69 (ISLSLLAALILFVFSIVDCAL) traverse the membrane as a helical segment. Topologically, residues 70–82 (SSKVVFDHGLKIY) are cytoplasmic. A helical transmembrane segment spans residues 83–103 (TIGSLSFSVICIFCFGVFLLL). The Extracellular portion of the chain corresponds to 104 to 139 (SRRWPYIIRRTAECEQIFLEPEYDCSYGRGYSSRLR). The chain crosses the membrane as a helical span at residues 140–160 (LWGVCMLVAALCEHSTYVGSA). Residues 161 to 204 (LYNNHLAIVECKLDANFWQNYFQRERQQLFLIMHFTAWWIPFIE) are Cytoplasmic-facing. Residues 205–225 (WTTLSMTFVWNFVDIFLILIC) form a helical membrane-spanning segment. The Extracellular segment spans residues 226-305 (RGMQMRFQQM…FQSKGNYADE (80 aa)). A helical membrane pass occupies residues 306 to 326 (LYFWFCLSYVIIRVLNMMFAA). Over 327-377 (SSIPQEAKEISYTLYEIPTEFWCVELRRLNEIFLSDHFALSGKGYFLLTRR) the chain is Cytoplasmic. A helical membrane pass occupies residues 378–398 (LIFAMAATLMVYELVLINQMA). Residues 399 to 419 (GSEVQKSFCEGGVGSSKSIFS) lie on the Extracellular side of the membrane.

Belongs to the insect chemoreceptor superfamily. Gustatory receptor (GR) family. Gr5a subfamily. Expressed in Gr5a-expressing sugar-sensing cells.

Its subcellular location is the cell membrane. In terms of biological role, one of the few identified sugar gustatory receptors identified so far and which promotes the starvation-induced increase of feeding motivation. This Drosophila melanogaster (Fruit fly) protein is Gustatory receptor for sugar taste 64c (Gr64c).